Here is a 448-residue protein sequence, read N- to C-terminus: uncharacterized protein (448 aa).

Over 1–50 (MAPEIFVKFKCASRDIKLLWASVFLRLLSYGLTNQVLTLFLNAINMTEDK) the chain is Extracellular. The chain crosses the membrane as a helical span at residues 51 to 71 (IGLFMSLTLAGDVICSYILTW). Over 72 to 93 (YADSWGRRRVLVYGCAMMLLSG) the chain is Cytoplasmic. Residues 94-114 (LVFSFSENFTLLLVFAIFGVI) traverse the membrane as a helical segment. Topologically, residues 115–146 (SPSSDEVGPFKSIEEAMIAHLSPHNARPEIYA) are extracellular. A helical membrane pass occupies residues 147 to 167 (IHALVGTIGSALGAIICGIFV). The Cytoplasmic segment spans residues 168–184 (DLLKRTGLAATDLQCYK). A helical membrane pass occupies residues 185 to 205 (LVFLLYAFFAFCKMVIMLLLS). The Extracellular segment spans residues 206-260 (DATELDGHYEHTDCNEETAEPLDVNDETAPLMRQATHPEERSNKLSKETVSVLMK). A helical transmembrane segment spans residues 261–281 (LLVIFMVDSLGSGFMTSGWMV). Residues 282-287 (YYYSKQ) are Cytoplasmic-facing. The helical transmembrane segment at 288–308 (FLMGSLALGTLFFITQLVMAS) threads the bilayer. Residues 309–333 (STIPSSIIARCFGPVRATLLVQIPS) lie on the Extracellular side of the membrane. A helical transmembrane segment spans residues 334-354 (GIFSILIPMAKNYLPLSILFL). At 355 to 386 (NLHFATTAMDVTPRQILLTNIIKPRDLTKVMG) the chain is on the cytoplasmic side. ATP is bound at residue 386 to 393 (GVVNIGKT). Residues 387 to 407 (VVNIGKTFARCVGPIFTGILA) form a helical membrane-spanning segment. The Extracellular segment spans residues 408-416 (NNNYLWLCY). A helical membrane pass occupies residues 417–437 (IISGSLVITADLILACMFLGV). Residues 438 to 448 (DAKIKKQMNRH) are Cytoplasmic-facing.

The protein resides in the membrane. This is an uncharacterized protein from Saccharomyces cerevisiae (strain ATCC 204508 / S288c) (Baker's yeast).